A 240-amino-acid chain; its full sequence is UDP-2,3-diacylglucosamine hydrolase (240 aa).

5 residues coordinate Mn(2+): Asp-8, His-10, Asp-41, Asn-79, and His-114. 79–80 (NR) contacts substrate. Substrate contacts are provided by Asp-122, Ser-160, Asn-164, Lys-167, and His-195. Mn(2+) is bound by residues His-195 and His-197.

The protein belongs to the LpxH family. The cofactor is Mn(2+).

It is found in the cell inner membrane. The catalysed reaction is UDP-2-N,3-O-bis[(3R)-3-hydroxytetradecanoyl]-alpha-D-glucosamine + H2O = 2-N,3-O-bis[(3R)-3-hydroxytetradecanoyl]-alpha-D-glucosaminyl 1-phosphate + UMP + 2 H(+). It participates in glycolipid biosynthesis; lipid IV(A) biosynthesis; lipid IV(A) from (3R)-3-hydroxytetradecanoyl-[acyl-carrier-protein] and UDP-N-acetyl-alpha-D-glucosamine: step 4/6. Functionally, hydrolyzes the pyrophosphate bond of UDP-2,3-diacylglucosamine to yield 2,3-diacylglucosamine 1-phosphate (lipid X) and UMP by catalyzing the attack of water at the alpha-P atom. Involved in the biosynthesis of lipid A, a phosphorylated glycolipid that anchors the lipopolysaccharide to the outer membrane of the cell. The sequence is that of UDP-2,3-diacylglucosamine hydrolase from Escherichia coli O127:H6 (strain E2348/69 / EPEC).